Here is a 134-residue protein sequence, read N- to C-terminus: ATP synthase epsilon chain (134 aa).

This sequence belongs to the ATPase epsilon chain family. In terms of assembly, F-type ATPases have 2 components, CF(1) - the catalytic core - and CF(0) - the membrane proton channel. CF(1) has five subunits: alpha(3), beta(3), gamma(1), delta(1), epsilon(1). CF(0) has three main subunits: a, b and c.

The protein resides in the cell inner membrane. Its function is as follows. Produces ATP from ADP in the presence of a proton gradient across the membrane. This Syntrophobacter fumaroxidans (strain DSM 10017 / MPOB) protein is ATP synthase epsilon chain.